A 189-amino-acid chain; its full sequence is Elongation factor P (189 aa).

This sequence belongs to the elongation factor P family.

Its subcellular location is the cytoplasm. The protein operates within protein biosynthesis; polypeptide chain elongation. In terms of biological role, involved in peptide bond synthesis. Stimulates efficient translation and peptide-bond synthesis on native or reconstituted 70S ribosomes in vitro. Probably functions indirectly by altering the affinity of the ribosome for aminoacyl-tRNA, thus increasing their reactivity as acceptors for peptidyl transferase. In Xanthobacter autotrophicus (strain ATCC BAA-1158 / Py2), this protein is Elongation factor P.